The following is a 260-amino-acid chain: MNNLNDPPNWNIRPNARADGGDGSKWNYALLVPMLGLAAFRWIWSRESQKEIEKARKAYHQRTAAFQQDLEAKYHAVISEHRRAVAQLSLELEKEQNRTSSFREALISQGRKLAEEKKLLEQERAQIKQEKSRLQPLRNVYLSCLQEEDDWQRRAQHVLKEVGEALEERQNIYCSLIIPRSARLELEKSLLVRTSVDPVAADLEMAAGLSDIFKHDKHCGDVWNTNKRQNGKLMWMYLKYWELLVELKKFKKVEKVILEK.

The stretch at 76–139 (AVISEHRRAV…EKSRLQPLRN (64 aa)) forms a coiled coil.

This Mus musculus (Mouse) protein is Coiled-coil domain-containing protein 127 (Ccdc127).